The following is a 568-amino-acid chain: MADNKTTTIEPINRRSANITQGKSRAPNRSMYYAMGYVEGDFVKPMVGVANGHSTITPCNSGLQKLTDAAIEGIEEAGGNAQVFGTPTISDGMAMGTEGMKYSLVSREVISDCIETCVSGQWLDGVLVVGGCDKNMPGGLMGMLRANVPAIYVYGGTILPGHYQGRELNIVSVFEAVGENAAGKLSDHDLREIEKRAIPGTGSCGGMYTANTMSSAFEALGISLPYSSTMANPHDEKTNSAKASAKVLIEAIRNDLKPRDIVTRKAIENAVAVIMATGGSTNAVLHFLAIAHAAGVPWSIDDFERVRQKTPVLCDLKPSGKYLAVDLHRAGGIPQVMKLLLNAGLLHGDCITIEGKTMAQVLKDVPDRPRADQNVIRPIDQPLYAQGHLAILKGNLSPEGAVAKITGLKNPVITGPARVFDDEQSALQAILDGKIQAGDVMVLRYLGPKGGPGMPEMLAPTGALIGAGLGESVGLITDGRFSGGTWGMVVGHVAPEAAAGGTIAFVHEGDSITIDARQLLLQLNVAEAEIARRRARWTAPAARYTRGVQAKFAFNASSASQGAVLDAY.

Cys-59 contributes to the [2Fe-2S] cluster binding site. Residue Asp-91 participates in Mg(2+) binding. A [2Fe-2S] cluster-binding site is contributed by Cys-132. Positions 133 and 134 each coordinate Mg(2+). Residue Lys-134 is modified to N6-carboxylysine. Cys-204 serves as a coordination point for [2Fe-2S] cluster. Residue Glu-456 coordinates Mg(2+). Residue Ser-482 is the Proton acceptor of the active site.

Belongs to the IlvD/Edd family. As to quaternary structure, homodimer. [2Fe-2S] cluster is required as a cofactor. Requires Mg(2+) as cofactor.

It carries out the reaction (2R)-2,3-dihydroxy-3-methylbutanoate = 3-methyl-2-oxobutanoate + H2O. The catalysed reaction is (2R,3R)-2,3-dihydroxy-3-methylpentanoate = (S)-3-methyl-2-oxopentanoate + H2O. It participates in amino-acid biosynthesis; L-isoleucine biosynthesis; L-isoleucine from 2-oxobutanoate: step 3/4. The protein operates within amino-acid biosynthesis; L-valine biosynthesis; L-valine from pyruvate: step 3/4. Functions in the biosynthesis of branched-chain amino acids. Catalyzes the dehydration of (2R,3R)-2,3-dihydroxy-3-methylpentanoate (2,3-dihydroxy-3-methylvalerate) into 2-oxo-3-methylpentanoate (2-oxo-3-methylvalerate) and of (2R)-2,3-dihydroxy-3-methylbutanoate (2,3-dihydroxyisovalerate) into 2-oxo-3-methylbutanoate (2-oxoisovalerate), the penultimate precursor to L-isoleucine and L-valine, respectively. This Verminephrobacter eiseniae (strain EF01-2) protein is Dihydroxy-acid dehydratase.